We begin with the raw amino-acid sequence, 197 residues long: Large ribosomal subunit protein uL13B (197 aa).

Serine 193 carries the post-translational modification Phosphoserine.

This sequence belongs to the universal ribosomal protein uL13 family. In terms of assembly, component of the large ribosomal subunit (LSU). Mature yeast ribosomes consist of a small (40S) and a large (60S) subunit. The 40S small subunit contains 1 molecule of ribosomal RNA (18S rRNA) and at least 33 different proteins. The large 60S subunit contains 3 rRNA molecules (25S, 5.8S and 5S rRNA) and at least 46 different proteins.

Its subcellular location is the cytoplasm. Functionally, component of the ribosome, a large ribonucleoprotein complex responsible for the synthesis of proteins in the cell. The small ribosomal subunit (SSU) binds messenger RNAs (mRNAs) and translates the encoded message by selecting cognate aminoacyl-transfer RNA (tRNA) molecules. The large subunit (LSU) contains the ribosomal catalytic site termed the peptidyl transferase center (PTC), which catalyzes the formation of peptide bonds, thereby polymerizing the amino acids delivered by tRNAs into a polypeptide chain. The nascent polypeptides leave the ribosome through a tunnel in the LSU and interact with protein factors that function in enzymatic processing, targeting, and the membrane insertion of nascent chains at the exit of the ribosomal tunnel. The polypeptide is Large ribosomal subunit protein uL13B (rpl1601) (Schizosaccharomyces pombe (strain 972 / ATCC 24843) (Fission yeast)).